Consider the following 406-residue polypeptide: Tryptophan 2,3-dioxygenase (406 aa).

Residues 72 to 76 (FIITH) and Arg-144 each bind substrate. A heme-binding site is contributed by His-328. Thr-342 lines the substrate pocket.

It belongs to the tryptophan 2,3-dioxygenase family. Homotetramer. Dimer of dimers. Heme is required as a cofactor.

It carries out the reaction L-tryptophan + O2 = N-formyl-L-kynurenine. Its pathway is amino-acid degradation; L-tryptophan degradation via kynurenine pathway; L-kynurenine from L-tryptophan: step 1/2. Its function is as follows. Heme-dependent dioxygenase that catalyzes the oxidative cleavage of the L-tryptophan (L-Trp) pyrrole ring and converts L-tryptophan to N-formyl-L-kynurenine. Catalyzes the oxidative cleavage of the indole moiety. The protein is Tryptophan 2,3-dioxygenase of Homo sapiens (Human).